Consider the following 92-residue polypeptide: Small ribosomal subunit protein uS19c (92 aa).

Belongs to the universal ribosomal protein uS19 family.

It is found in the plastid. The protein resides in the chloroplast. In terms of biological role, protein S19 forms a complex with S13 that binds strongly to the 16S ribosomal RNA. This Phaseolus angularis (Azuki bean) protein is Small ribosomal subunit protein uS19c.